Reading from the N-terminus, the 196-residue chain is Chloroplastic ATP-dependent Clp protease proteolytic subunit 1 (196 aa).

The Nucleophile role is filled by Ser-101. His-126 is an active-site residue.

Belongs to the peptidase S14 family. As to quaternary structure, component of the chloroplastic Clp protease core complex which consist of at least 16 proteins: CLPP4 (3 copies), CLPP5 (3 copies), CLPR4 (2 copies), ClpP1 (1 copy), CLPP6 (1 copy), CLPR2 (1 copy), CLPT1 (1 copy), CLPT2 (1 copy) and 3 copies of CLPP3 and/or CLPR1 and/or CLPR3. The core complex is organized in two heptameric rings, one containing CLPP3,4,5,6 in a 1:2:3:1 ratio and the other CLPP1 and CLPR1,2,3,4 in a 3:1:1:1:1 ratio. As to expression, mostly expressed in leaves. Also detected in stems, and to a lower extent, in roots (at protein level).

The protein resides in the plastid. It is found in the chloroplast stroma. The catalysed reaction is Hydrolysis of proteins to small peptides in the presence of ATP and magnesium. alpha-casein is the usual test substrate. In the absence of ATP, only oligopeptides shorter than five residues are hydrolyzed (such as succinyl-Leu-Tyr-|-NHMec, and Leu-Tyr-Leu-|-Tyr-Trp, in which cleavage of the -Tyr-|-Leu- and -Tyr-|-Trp bonds also occurs).. Cleaves peptides in various proteins in a process that requires ATP hydrolysis. Has a chymotrypsin-like activity. Plays a major role in the degradation of misfolded proteins. The protein is Chloroplastic ATP-dependent Clp protease proteolytic subunit 1 of Arabidopsis thaliana (Mouse-ear cress).